We begin with the raw amino-acid sequence, 864 residues long: Calphotin (864 aa).

The tract at residues 816-858 (LQTTDVSLLAIAATLDAIGEKLKDQKARNQQVMDRLCEIEKIL) is leucine-zipper.

As to quaternary structure, homodimer. In terms of tissue distribution, soma and axons of photoreceptor cells of compound eyes and ocelli.

It localises to the cytoplasm. Its function is as follows. Plays important roles in both rhabdomere development and in photoreceptor cell survival. Might function as a calcium-sequestering 'sponge' to regulate the amount of free cytoplasmic calcium. It binds 0.3 mole of Ca(2+) per mole of protein. This is Calphotin (Cpn) from Drosophila melanogaster (Fruit fly).